The primary structure comprises 415 residues: tRNA(Ile2) 2-agmatinylcytidine synthetase TiaS (415 aa).

It belongs to the TiaS family.

Its subcellular location is the cytoplasm. It catalyses the reaction cytidine(34) in tRNA(Ile2) + agmatine + ATP + H2O = 2-agmatinylcytidine(34) in tRNA(Ile2) + AMP + 2 phosphate + 2 H(+). Functionally, ATP-dependent agmatine transferase that catalyzes the formation of 2-agmatinylcytidine (agm2C) at the wobble position (C34) of tRNA(Ile2), converting the codon specificity from AUG to AUA. This chain is tRNA(Ile2) 2-agmatinylcytidine synthetase TiaS, found in Methanocorpusculum labreanum (strain ATCC 43576 / DSM 4855 / Z).